Reading from the N-terminus, the 151-residue chain is Probable calcium-binding protein CML31 (151 aa).

EF-hand domains are found at residues 14–42 (ALFATFDHDGDGRISAAELRLCMKTTLGE), 44–79 (VSDEEAGQLVASVDADGDGLLCEAEFVRLVQAAEVE), 84–119 (RRGTGLREAFGMYEMEGEGCITPTSLRRMLRRLGSD), and 120–151 (QDIDDCRAMICRFDLNGDGVLSFDEFKIMMNA). Ca(2+)-binding residues include aspartate 20, aspartate 22, aspartate 24, arginine 26, glutamate 31, aspartate 57, aspartate 59, aspartate 61, and glutamate 68. Positions 133, 135, 137, and 144 each coordinate Ca(2+).

Functionally, potential calcium sensor. In Oryza sativa subsp. japonica (Rice), this protein is Probable calcium-binding protein CML31 (CML31).